Here is a 42-residue protein sequence, read N- to C-terminus: MINTNQPVAYPIFTFRWLTIHALAVPTVFFLGAITSMQFIQR.

The chain crosses the membrane as a helical span at residues 17-33 (WLTIHALAVPTVFFLGA). Residue histidine 21 participates in heme binding.

It belongs to the PsbE/PsbF family. In terms of assembly, heterodimer of an alpha subunit and a beta subunit. PSII is composed of 1 copy each of membrane proteins PsbA, PsbB, PsbC, PsbD, PsbE, PsbF, PsbH, PsbI, PsbJ, PsbK, PsbL, PsbM, PsbT, PsbX, PsbY, PsbZ, Psb30/Ycf12, at least 3 peripheral proteins of the oxygen-evolving complex and a large number of cofactors. It forms dimeric complexes. The cofactor is heme b.

It localises to the plastid. Its subcellular location is the chloroplast thylakoid membrane. Functionally, this b-type cytochrome is tightly associated with the reaction center of photosystem II (PSII). PSII is a light-driven water:plastoquinone oxidoreductase that uses light energy to abstract electrons from H(2)O, generating O(2) and a proton gradient subsequently used for ATP formation. It consists of a core antenna complex that captures photons, and an electron transfer chain that converts photonic excitation into a charge separation. This chain is Cytochrome b559 subunit beta, found in Emiliania huxleyi (Coccolithophore).